Consider the following 408-residue polypeptide: LL-diaminopimelate aminotransferase (408 aa).

Positions 15 and 42 each coordinate substrate. Pyridoxal 5'-phosphate-binding positions include tyrosine 72, 108-109 (SK), tyrosine 132, asparagine 187, tyrosine 218, and 246-248 (SFS). Substrate contacts are provided by lysine 109, tyrosine 132, and asparagine 187. Lysine 249 carries the N6-(pyridoxal phosphate)lysine modification. 2 residues coordinate pyridoxal 5'-phosphate: arginine 257 and asparagine 292. Substrate contacts are provided by asparagine 292 and arginine 388.

Belongs to the class-I pyridoxal-phosphate-dependent aminotransferase family. LL-diaminopimelate aminotransferase subfamily. Homodimer. Pyridoxal 5'-phosphate serves as cofactor.

The enzyme catalyses (2S,6S)-2,6-diaminopimelate + 2-oxoglutarate = (S)-2,3,4,5-tetrahydrodipicolinate + L-glutamate + H2O + H(+). It participates in amino-acid biosynthesis; L-lysine biosynthesis via DAP pathway; LL-2,6-diaminopimelate from (S)-tetrahydrodipicolinate (aminotransferase route): step 1/1. In terms of biological role, involved in the synthesis of meso-diaminopimelate (m-DAP or DL-DAP), required for both lysine and peptidoglycan biosynthesis. Catalyzes the direct conversion of tetrahydrodipicolinate to LL-diaminopimelate. The chain is LL-diaminopimelate aminotransferase from Prochlorococcus marinus (strain MIT 9303).